An 82-amino-acid chain; its full sequence is Cytochrome b-c1 complex subunit 8 (82 aa).

At 1–39 (MGREFGNLTRMRHVISYSLSPFEQRAHPHVFTKGIPNVL) the chain is on the mitochondrial matrix side. At serine 16 the chain carries Phosphoserine. Lysine 33 carries the N6-acetyllysine; alternate modification. An N6-succinyllysine; alternate modification is found at lysine 33. A helical membrane pass occupies residues 40 to 68 (RRFRESFFRVAPQFVVFYLIYTWGTEEFE). The Mitochondrial intermembrane portion of the chain corresponds to 69 to 82 (RSKRKNPAAYENDK).

Belongs to the UQCRQ/QCR8 family. Component of the ubiquinol-cytochrome c oxidoreductase (cytochrome b-c1 complex, complex III, CIII), a multisubunit enzyme composed of 11 subunits. The complex is composed of 3 respiratory subunits cytochrome b, cytochrome c1 and Rieske protein UQCRFS1, 2 core protein subunits UQCRC1/QCR1 and UQCRC2/QCR2, and 6 low-molecular weight protein subunits UQCRH/QCR6, UQCRB/QCR7, UQCRQ/QCR8, UQCR10/QCR9, UQCR11/QCR10 and subunit 9, the cleavage product of Rieske protein UQCRFS1. The complex exists as an obligatory dimer and forms supercomplexes (SCs) in the inner mitochondrial membrane with NADH-ubiquinone oxidoreductase (complex I, CI) and cytochrome c oxidase (complex IV, CIV), resulting in different assemblies (supercomplex SCI(1)III(2)IV(1) and megacomplex MCI(2)III(2)IV(2)). Interacts with UQCC6.

It is found in the mitochondrion inner membrane. In terms of biological role, component of the ubiquinol-cytochrome c oxidoreductase, a multisubunit transmembrane complex that is part of the mitochondrial electron transport chain which drives oxidative phosphorylation. The respiratory chain contains 3 multisubunit complexes succinate dehydrogenase (complex II, CII), ubiquinol-cytochrome c oxidoreductase (cytochrome b-c1 complex, complex III, CIII) and cytochrome c oxidase (complex IV, CIV), that cooperate to transfer electrons derived from NADH and succinate to molecular oxygen, creating an electrochemical gradient over the inner membrane that drives transmembrane transport and the ATP synthase. The cytochrome b-c1 complex catalyzes electron transfer from ubiquinol to cytochrome c, linking this redox reaction to translocation of protons across the mitochondrial inner membrane, with protons being carried across the membrane as hydrogens on the quinol. In the process called Q cycle, 2 protons are consumed from the matrix, 4 protons are released into the intermembrane space and 2 electrons are passed to cytochrome c. The chain is Cytochrome b-c1 complex subunit 8 (UQCRQ) from Pongo abelii (Sumatran orangutan).